The following is a 266-amino-acid chain: Single-stranded DNA-binding protein WHY1, chloroplastic (266 aa).

Residues 1–37 constitute a chloroplast transit peptide; it reads MPPPAPLFLSLASTPPPALMPVHHPRAPQSLTLVPPV. The interval 53–81 is disordered; sequence SPRHSDYFDPRAPPPPRGDGGYGRPPNGA. The segment at 94–99 is required for ssDNA binding; it reads KGKAAL. The Nuclear localization signal motif lies at 172 to 185; the sequence is KGRSEEGKVRKVLK.

This sequence belongs to the Whirly family. As to quaternary structure, homotetramer.

Its subcellular location is the plastid. The protein localises to the chloroplast stroma. It is found in the nucleus. Its function is as follows. Single-stranded DNA and RNA binding protein that maintains plastid genome stability by preventing break-induced and short homology-dependent illegitimate recombinations. Functions in RNA metabolism and is involved in the maturation of the atpF and 23S ribosomal RNAs. This Zea mays (Maize) protein is Single-stranded DNA-binding protein WHY1, chloroplastic (WHY1).